The following is a 103-amino-acid chain: MSVQGIEGVLQQLQVTALQASGSAKTLPAEAGFASELKAAIGKISENQQTARTLAQNFELGVPGVGINDVMVNMQKSSVSLQLGIQVRNKLVAAYQDVMNMGV.

It belongs to the FliE family.

The protein localises to the bacterial flagellum basal body. The polypeptide is Flagellar hook-basal body complex protein FliE (Yersinia enterocolitica serotype O:8 / biotype 1B (strain NCTC 13174 / 8081)).